Reading from the N-terminus, the 205-residue chain is N-(5'-phosphoribosyl)anthranilate isomerase (205 aa).

It belongs to the TrpF family.

The enzyme catalyses N-(5-phospho-beta-D-ribosyl)anthranilate = 1-(2-carboxyphenylamino)-1-deoxy-D-ribulose 5-phosphate. Its pathway is amino-acid biosynthesis; L-tryptophan biosynthesis; L-tryptophan from chorismate: step 3/5. This chain is N-(5'-phosphoribosyl)anthranilate isomerase, found in Thermotoga neapolitana (strain ATCC 49049 / DSM 4359 / NBRC 107923 / NS-E).